The sequence spans 157 residues: Nucleoside diphosphate kinase (157 aa).

5 residues coordinate ATP: lysine 12, phenylalanine 60, arginine 88, threonine 94, and arginine 105. Residue histidine 121 is the Pros-phosphohistidine intermediate of the active site.

The protein belongs to the NDK family. Requires Mg(2+) as cofactor.

The protein resides in the cytoplasm. The catalysed reaction is a 2'-deoxyribonucleoside 5'-diphosphate + ATP = a 2'-deoxyribonucleoside 5'-triphosphate + ADP. The enzyme catalyses a ribonucleoside 5'-diphosphate + ATP = a ribonucleoside 5'-triphosphate + ADP. Functionally, major role in the synthesis of nucleoside triphosphates other than ATP. The ATP gamma phosphate is transferred to the NDP beta phosphate via a ping-pong mechanism, using a phosphorylated active-site intermediate. In Pyrococcus horikoshii (strain ATCC 700860 / DSM 12428 / JCM 9974 / NBRC 100139 / OT-3), this protein is Nucleoside diphosphate kinase.